The following is a 112-amino-acid chain: Large ribosomal subunit protein uL22 (112 aa).

Belongs to the universal ribosomal protein uL22 family. As to quaternary structure, part of the 50S ribosomal subunit.

Its function is as follows. This protein binds specifically to 23S rRNA; its binding is stimulated by other ribosomal proteins, e.g. L4, L17, and L20. It is important during the early stages of 50S assembly. It makes multiple contacts with different domains of the 23S rRNA in the assembled 50S subunit and ribosome. Functionally, the globular domain of the protein is located near the polypeptide exit tunnel on the outside of the subunit, while an extended beta-hairpin is found that lines the wall of the exit tunnel in the center of the 70S ribosome. The polypeptide is Large ribosomal subunit protein uL22 (Finegoldia magna (strain ATCC 29328 / DSM 20472 / WAL 2508) (Peptostreptococcus magnus)).